We begin with the raw amino-acid sequence, 101 residues long: Urease subunit gamma (101 aa).

Belongs to the urease gamma subunit family. Heterotrimer of UreA (gamma), UreB (beta) and UreC (alpha) subunits. Three heterotrimers associate to form the active enzyme.

It is found in the cytoplasm. The enzyme catalyses urea + 2 H2O + H(+) = hydrogencarbonate + 2 NH4(+). Its pathway is nitrogen metabolism; urea degradation; CO(2) and NH(3) from urea (urease route): step 1/1. The polypeptide is Urease subunit gamma (Ureaplasma urealyticum (Ureaplasma urealyticum biotype 2)).